Consider the following 82-residue polypeptide: Beta-defensin 113 (82 aa).

An N-terminal signal peptide occupies residues 1–16; it reads MKILCIFLTFFFTVSC. Disulfide bonds link Cys-35-Cys-61, Cys-42-Cys-56, and Cys-46-Cys-62.

The protein belongs to the beta-defensin family.

It is found in the secreted. In terms of biological role, has antibacterial activity. The protein is Beta-defensin 113 (DEFB113) of Pan troglodytes (Chimpanzee).